A 488-amino-acid chain; its full sequence is V-type proton ATPase subunit B 1 (488 aa).

This sequence belongs to the ATPase alpha/beta chains family. As to quaternary structure, V-ATPase is a heteromultimeric enzyme composed of a peripheral catalytic V1 complex (main components: subunits A, B, C, D, E, and F) attached to an integral membrane V0 proton pore complex (main component: the proteolipid protein).

Its function is as follows. Non-catalytic subunit of the peripheral V1 complex of vacuolar ATPase. V-ATPase is responsible for acidifying a variety of intracellular compartments in eukaryotic cells. The chain is V-type proton ATPase subunit B 1 from Gossypium hirsutum (Upland cotton).